The sequence spans 195 residues: Probable GTP-binding protein EngB (195 aa).

The EngB-type G domain occupies 24 to 195; it reads GLSEVGLSGR…QIWNVIEKYL (172 aa). GTP-binding positions include 32 to 39, 59 to 63, 77 to 80, 144 to 147, and 176 to 178; these read GRSNVGKS, GKTQT, DVPG, TKED, and YSS. The Mg(2+) site is built by Ser-39 and Thr-61.

This sequence belongs to the TRAFAC class TrmE-Era-EngA-EngB-Septin-like GTPase superfamily. EngB GTPase family. It depends on Mg(2+) as a cofactor.

In terms of biological role, necessary for normal cell division and for the maintenance of normal septation. The sequence is that of Probable GTP-binding protein EngB from Staphylococcus saprophyticus subsp. saprophyticus (strain ATCC 15305 / DSM 20229 / NCIMB 8711 / NCTC 7292 / S-41).